Here is a 59-residue protein sequence, read N- to C-terminus: ATP synthase protein 8 (59 aa).

A helical membrane pass occupies residues 7–23 (LSPPFLYFELIGHFQVE).

The protein belongs to the ATPase protein 8 family. F-type ATPases have 2 components, CF(1) - the catalytic core - and CF(0) - the membrane proton channel.

The protein localises to the mitochondrion membrane. Functionally, mitochondrial membrane ATP synthase (F(1)F(0) ATP synthase or Complex V) produces ATP from ADP in the presence of a proton gradient across the membrane which is generated by electron transport complexes of the respiratory chain. F-type ATPases consist of two structural domains, F(1) - containing the extramembraneous catalytic core and F(0) - containing the membrane proton channel, linked together by a central stalk and a peripheral stalk. During catalysis, ATP synthesis in the catalytic domain of F(1) is coupled via a rotary mechanism of the central stalk subunits to proton translocation. Part of the complex F(0) domain. Minor subunit located with subunit a in the membrane. This chain is ATP synthase protein 8 (MT-ATP8), found in Oenothera berteroana (Bertero's evening primrose).